The following is a 147-amino-acid chain: Ribonuclease H (147 aa).

The 142-residue stretch at 1–142 (MKKVSIYTDG…CDKLATDEIK (142 aa)) folds into the RNase H type-1 domain. The Mg(2+) site is built by D9, E47, D69, and D134.

Belongs to the RNase H family. As to quaternary structure, monomer. Mg(2+) serves as cofactor.

The protein localises to the cytoplasm. The catalysed reaction is Endonucleolytic cleavage to 5'-phosphomonoester.. In terms of biological role, endonuclease that specifically degrades the RNA of RNA-DNA hybrids. The chain is Ribonuclease H from Acetivibrio thermocellus (strain ATCC 27405 / DSM 1237 / JCM 9322 / NBRC 103400 / NCIMB 10682 / NRRL B-4536 / VPI 7372) (Clostridium thermocellum).